The following is a 152-amino-acid chain: Superoxide dismutase [Cu-Zn] (152 aa).

The Cu cation site is built by His-45, His-47, and His-62. Residues 61–87 are disordered; it reads PHFNPAGKEHGAPEDENRHAGDLGNAT. Positions 62, 70, 79, and 82 each coordinate Zn(2+). The span at 67-81 shows a compositional bias: basic and acidic residues; that stretch reads GKEHGAPEDENRHAG. Residue His-119 coordinates Cu cation.

This sequence belongs to the Cu-Zn superoxide dismutase family. Homodimer. Cu cation serves as cofactor. Zn(2+) is required as a cofactor.

It is found in the cytoplasm. It carries out the reaction 2 superoxide + 2 H(+) = H2O2 + O2. Destroys radicals which are normally produced within the cells and which are toxic to biological systems. The sequence is that of Superoxide dismutase [Cu-Zn] from Zingiber officinale (Ginger).